The primary structure comprises 247 residues: Lysosomal membrane ascorbate-dependent ferrireductase CYB561A3 (247 aa).

The Cytoplasmic segment spans residues 1–3 (MRG). The helical transmembrane segment at 4–24 (IVGFYITYLLCLILGIACVVL) threads the bilayer. The region spanning 13–223 (LCLILGIACV…FGLVVLKILS (211 aa)) is the Cytochrome b561 domain. Residues 25 to 46 (VVHWNFMYRDGFAWDGSSKNFN) lie on the Lumenal side of the membrane. Residues 47–67 (WHPVLMVTGMLVLYGNAAVVY) traverse the membrane as a helical segment. Histidine 48 and arginine 68 together coordinate heme b. The Cytoplasmic segment spans residues 68–82 (RIPLTWGHNKLPWKL). Residues lysine 77 and lysine 81 each contribute to the L-ascorbate site. The chain crosses the membrane as a helical span at residues 83-103 (LHAGLLLLSFIFSVIGLCAVF). Residues histidine 84, 113 to 116 (NLYS), and histidine 118 each bind heme b. The Lumenal portion of the chain corresponds to 104–120 (NFHNVHHTANLYSLHSW). Residues 121–141 (VGICTAALFTAQWVMGFTSFL) traverse the membrane as a helical segment. Residues 142–155 (LPCTPMAVRAFVKP) lie on the Cytoplasmic side of the membrane. Arginine 150 is a binding site for L-ascorbate. Residues 156 to 176 (THVWMGAMILVLSIVSCISGI) form a helical membrane-spanning segment. Histidine 157 and glutamate 178 together coordinate heme b. The Lumenal segment spans residues 177 to 201 (NEKLFFVLKETTNGTKPYSALPPEA). N-linked (GlcNAc...) asparagine glycosylation is present at asparagine 189. Residues 202 to 222 (VAANSLGVIIVAFGLVVLKIL) traverse the membrane as a helical segment. The Cytoplasmic portion of the chain corresponds to 223–247 (SNQMWQRPEPGDDEGVYRPLAYDGS). Residue glutamine 228 participates in heme b binding.

As to quaternary structure, homodimer. It depends on heme b as a cofactor.

It localises to the late endosome membrane. The protein resides in the lysosome membrane. It carries out the reaction Fe(3+)(out) + L-ascorbate(in) = monodehydro-L-ascorbate radical(in) + Fe(2+)(out) + H(+). Its function is as follows. Transmembrane reductase that uses ascorbate as an electron donor in the cytoplasm and transfers electrons across membranes to reduce iron cations Fe(3+) into Fe(2+) in the lumen of the late endosome and lysosome. Reduced iron can then be extruded from the late endosome and lysosome to the cytoplasm by divalent metal-specific transporters. It is therefore most probably involved in endosomal and lysosomal cellular iron homeostasis. This Danio rerio (Zebrafish) protein is Lysosomal membrane ascorbate-dependent ferrireductase CYB561A3 (cyb561a3a).